The primary structure comprises 143 residues: Histone H2B.2, sperm (143 aa).

Residues 1–52 are disordered; sequence MPRSPSKSSPRKGSPRKGSPRKGSPKRGGKGAKRAGKGGRRRNVVKRRRRRR. 5 short sequence motifs (SPKK motif) span residues 4–7, 9–12, 14–17, 19–22, and 24–27; these read SPSK, SPRK, and SPKR. Positions 9–52 are enriched in basic residues; that stretch reads SPRKGSPRKGSPRKGSPKRGGKGAKRAGKGGRRRNVVKRRRRRR. 3 positions are modified to phosphoserine: Ser-14, Ser-19, and Ser-24. O-linked (GlcNAc) serine glycosylation occurs at Ser-130. Lys-138 participates in a covalent cross-link: Glycyl lysine isopeptide (Lys-Gly) (interchain with G-Cter in ubiquitin).

This sequence belongs to the histone H2B family. The nucleosome is a histone octamer containing two molecules each of H2A, H2B, H3 and H4 assembled in one H3-H4 heterotetramer and two H2A-H2B heterodimers. The octamer wraps approximately 147 bp of DNA. Post-translationally, monoubiquitination of Lys-138 gives a specific tag for epigenetic transcriptional activation and is also prerequisite for histone H3 'Lys-4' and 'Lys-79' methylation. In terms of processing, phosphorylated on SPKK motifs 3, 4 and 5; which may regulate DNA binding. Dephosphorylated during maturation of spermatids to mature sperm and rephosphorylated at fertilization. GlcNAcylation at Ser-130 promotes monoubiquitination of Lys-138. It fluctuates in response to extracellular glucose, and associates with transcribed genes. As to expression, testis-specific.

Its subcellular location is the nucleus. The protein localises to the chromosome. Its function is as follows. Core component of nucleosome. Nucleosomes wrap and compact DNA into chromatin, limiting DNA accessibility to the cellular machineries which require DNA as a template. Histones thereby play a central role in transcription regulation, DNA repair, DNA replication and chromosomal stability. DNA accessibility is regulated via a complex set of post-translational modifications of histones, also called histone code, and nucleosome remodeling. The chain is Histone H2B.2, sperm from Lytechinus pictus (Painted sea urchin).